A 266-amino-acid polypeptide reads, in one-letter code: rRNA adenine N-6-methyltransferase (266 aa).

Residues H14, T16, G41, E62, D87, and N103 each coordinate S-adenosyl-L-methionine.

The protein belongs to the class I-like SAM-binding methyltransferase superfamily. rRNA adenine N(6)-methyltransferase family.

In terms of biological role, involved in erythromycin resistance. In Bacteroides fragilis, this protein is rRNA adenine N-6-methyltransferase (ermFU).